Reading from the N-terminus, the 188-residue chain is Ion-translocating oxidoreductase complex subunit B (188 aa).

The interval 1-23 (MFTAIWVMVGLAIAIGLILGWSA) is hydrophobic. The 4Fe-4S domain maps to 29–88 (EGNPLAEKIDAILPQTQCGQCGFPGCRPYAEAIAKGEADINQCPPGGEEGVKKLAELLGV). [4Fe-4S] cluster contacts are provided by Cys46, Cys49, Cys54, Cys71, Cys113, Cys116, Cys119, Cys123, Cys143, Cys146, Cys149, and Cys153. 4Fe-4S ferredoxin-type domains follow at residues 104–133 (SVAF…GAAK) and 134–163 (QMHT…MVPI).

Belongs to the 4Fe4S bacterial-type ferredoxin family. RnfB subfamily. In terms of assembly, the complex is composed of six subunits: RnfA, RnfB, RnfC, RnfD, RnfE and RnfG. Requires [4Fe-4S] cluster as cofactor.

It is found in the cell inner membrane. Functionally, part of a membrane-bound complex that couples electron transfer with translocation of ions across the membrane. This Thiobacillus denitrificans (strain ATCC 25259 / T1) protein is Ion-translocating oxidoreductase complex subunit B.